Reading from the N-terminus, the 274-residue chain is Remorin 4.2 (274 aa).

Over residues 1-30 (MLTLYHQERSPDATSNDRDETPETVVREVH) the composition is skewed to basic and acidic residues. 3 disordered regions span residues 1–71 (MLTL…EGEN), 117–157 (TDHE…TVQR), and 218–245 (AMEKTQNNVAKAQRKAEERRATAEAKRG). Polar residues-rich tracts occupy residues 61 to 71 (RSATTMSEGEN) and 145 to 156 (GPGQSRVGSTVQ). Positions 204-239 (MKKIERKLEERKAKAMEKTQNNVAKAQRKAEERRAT) form a coiled coil. A compositionally biased stretch (basic and acidic residues) spans 231-245 (RKAEERRATAEAKRG).

This sequence belongs to the remorin family. Forms homodimer and heterodimer with REM4.1. Interacts with KIN11. Probably ubiquitinated and degraded by the 26S proteasome pathway. In terms of tissue distribution, predominantly detected in bud, stem, root, flower, silique, and leaves, and enhanced dramatically in senescence leaf.

It localises to the cell membrane. In terms of biological role, collaborates with REM4.1 to positively regulate the BCTV and BSCTV susceptibility. The protein is Remorin 4.2 of Arabidopsis thaliana (Mouse-ear cress).